We begin with the raw amino-acid sequence, 407 residues long: Arginine biosynthesis bifunctional protein ArgJ (407 aa).

6 residues coordinate substrate: threonine 154, lysine 180, threonine 191, glutamate 278, asparagine 402, and serine 407. Threonine 191 functions as the Nucleophile in the catalytic mechanism.

The protein belongs to the ArgJ family. Heterotetramer of two alpha and two beta chains.

It localises to the cytoplasm. It catalyses the reaction N(2)-acetyl-L-ornithine + L-glutamate = N-acetyl-L-glutamate + L-ornithine. It carries out the reaction L-glutamate + acetyl-CoA = N-acetyl-L-glutamate + CoA + H(+). The protein operates within amino-acid biosynthesis; L-arginine biosynthesis; L-ornithine and N-acetyl-L-glutamate from L-glutamate and N(2)-acetyl-L-ornithine (cyclic): step 1/1. It functions in the pathway amino-acid biosynthesis; L-arginine biosynthesis; N(2)-acetyl-L-ornithine from L-glutamate: step 1/4. In terms of biological role, catalyzes two activities which are involved in the cyclic version of arginine biosynthesis: the synthesis of N-acetylglutamate from glutamate and acetyl-CoA as the acetyl donor, and of ornithine by transacetylation between N(2)-acetylornithine and glutamate. The sequence is that of Arginine biosynthesis bifunctional protein ArgJ from Psychrobacter arcticus (strain DSM 17307 / VKM B-2377 / 273-4).